Here is a 91-residue protein sequence, read N- to C-terminus: Elongation factor 1-beta (91 aa).

This sequence belongs to the EF-1-beta/EF-1-delta family.

Functionally, promotes the exchange of GDP for GTP in EF-1-alpha/GDP, thus allowing the regeneration of EF-1-alpha/GTP that could then be used to form the ternary complex EF-1-alpha/GTP/AAtRNA. This is Elongation factor 1-beta from Thermococcus onnurineus (strain NA1).